A 29-amino-acid polypeptide reads, in one-letter code: U-homostoxin-Hdu1a (29 aa).

Thr-1 carries an O-linked (GlcNAc...) threonine glycan. Disulfide bonds link Cys-7–Cys-19 and Cys-10–Cys-25.

The protein belongs to the sea anemone BBH family.

The protein resides in the secreted. It is found in the nematocyst. This chain is U-homostoxin-Hdu1a, found in Homostichanthus duerdeni (Sea anemone).